The sequence spans 195 residues: MTGSTETRQKEVKEPQVDVSDDSDNEAVEQELTEEQRRVAEAAGLGDHIDKQAKQSRSEKKARKLFSKLGLKQVTGVSRVCIRKSKNILFVINKPDVFKSPGSDTYIIFGEAKIEDLTQHAQMSAIENLKPTREAPQLKTVEEDENEDVEEDSTGIEEKDIELVISQANTTRNKAIRALKEADNDIVNAIMSLTM.

2 disordered regions span residues 1-59 and 132-153; these read MTGS…SRSE and TREA…EEDS. Residues 7-16 are compositionally biased toward basic and acidic residues; the sequence is TRQKEVKEPQ. Residues 19 to 33 are compositionally biased toward acidic residues; it reads VSDDSDNEAVEQELT. Basic and acidic residues predominate over residues 47-59; sequence DHIDKQAKQSRSE. The 66-residue stretch at 56-121 folds into the NAC-A/B domain; that stretch reads SRSEKKARKL…AKIEDLTQHA (66 aa). Acidic residues predominate over residues 142–153; it reads EEDENEDVEEDS.

It belongs to the NAC-alpha family. As to quaternary structure, may be part of the nascent polypeptide-associated complex (NAC), which is a heterodimer of icd-2 and icd-1 (via NAC-A/B domains).

Its subcellular location is the cytoplasm. In terms of biological role, may prevent inappropriate targeting of non-secretory polypeptides to the endoplasmic reticulum (ER). Plays a role in the response to heat stress. The sequence is that of Nascent polypeptide-associated complex subunit alpha from Caenorhabditis elegans.